The primary structure comprises 76 residues: uncharacterized protein (76 aa).

This is an uncharacterized protein from Bacillus subtilis (strain 168).